The primary structure comprises 480 residues: Protein nucleotidyltransferase YdiU (480 aa).

Gly-86, Gly-88, Arg-89, Lys-109, Asp-121, Gly-122, Arg-172, and Arg-179 together coordinate ATP. Asp-248 acts as the Proton acceptor in catalysis. Mg(2+) is bound by residues Asn-249 and Asp-258. Asp-258 is an ATP binding site.

The protein belongs to the SELO family. Mg(2+) is required as a cofactor. Mn(2+) serves as cofactor.

It catalyses the reaction L-seryl-[protein] + ATP = 3-O-(5'-adenylyl)-L-seryl-[protein] + diphosphate. The catalysed reaction is L-threonyl-[protein] + ATP = 3-O-(5'-adenylyl)-L-threonyl-[protein] + diphosphate. It carries out the reaction L-tyrosyl-[protein] + ATP = O-(5'-adenylyl)-L-tyrosyl-[protein] + diphosphate. The enzyme catalyses L-histidyl-[protein] + UTP = N(tele)-(5'-uridylyl)-L-histidyl-[protein] + diphosphate. It catalyses the reaction L-seryl-[protein] + UTP = O-(5'-uridylyl)-L-seryl-[protein] + diphosphate. The catalysed reaction is L-tyrosyl-[protein] + UTP = O-(5'-uridylyl)-L-tyrosyl-[protein] + diphosphate. Nucleotidyltransferase involved in the post-translational modification of proteins. It can catalyze the addition of adenosine monophosphate (AMP) or uridine monophosphate (UMP) to a protein, resulting in modifications known as AMPylation and UMPylation. The chain is Protein nucleotidyltransferase YdiU from Salmonella paratyphi B (strain ATCC BAA-1250 / SPB7).